We begin with the raw amino-acid sequence, 228 residues long: Transcription repressor OFP8 (228 aa).

Composition is skewed to low complexity over residues 1-14 (MSGRSSRRGSFSLR), 54-79 (ASSTSTTTAFTATTGGAGTATSTDSS), and 92-101 (EEPAAAQQEQ). 2 disordered regions span residues 1–21 (MSGRSSRRGSFSLRQPPVVDI) and 36–143 (SSSS…QLQE). The span at 107–120 (RRRRRQQRRRRRRA) shows a compositional bias: basic residues. Residues 157-216 (VAVESAEPYEDFRESMVQMVVEKEIYAWDDLNDLLHQFLSLNSPRHHPLILHAFADLWTR) form the OVATE domain.

As to quaternary structure, interacts with GSK2. Post-translationally, phosphorylated on serine and threonine residues by GSK2. Dephosphorylated during response to brassinosteroid. In terms of tissue distribution, expressed in roots, stems, stem nodes, young leaves, leaf sheaths, lamina joints, young spikelets, inflorescences, stamens and ovaries, embryos and seeds.

It localises to the nucleus. The protein resides in the cytoplasm. In terms of biological role, probable transcriptional repressor that regulates multiple aspects of plant growth and development, partly through brassinosteroid (BR) signaling pathway. Acts downstream of the kinase GSK2, a negative regulator of BR signaling. This is Transcription repressor OFP8 from Oryza sativa subsp. japonica (Rice).